The following is a 118-amino-acid chain: MARIAGVNIPDNKHAAISLTYIFGIGRTRAQEICAATGIAPTAKVQDLSAEEVDTLRNEVGKYTVEGDLRRDTTLNIKRLMDLGCYRGLRHRRGLPLRGQRTKTNARTRKGPRKPIRK.

Residues 94–118 (GLPLRGQRTKTNARTRKGPRKPIRK) are disordered.

Belongs to the universal ribosomal protein uS13 family. As to quaternary structure, part of the 30S ribosomal subunit. Forms a loose heterodimer with protein S19. Forms two bridges to the 50S subunit in the 70S ribosome.

Located at the top of the head of the 30S subunit, it contacts several helices of the 16S rRNA. In the 70S ribosome it contacts the 23S rRNA (bridge B1a) and protein L5 of the 50S subunit (bridge B1b), connecting the 2 subunits; these bridges are implicated in subunit movement. Contacts the tRNAs in the A and P-sites. The protein is Small ribosomal subunit protein uS13 of Chromohalobacter salexigens (strain ATCC BAA-138 / DSM 3043 / CIP 106854 / NCIMB 13768 / 1H11).